The following is a 369-amino-acid chain: Maltose/maltodextrin import ATP-binding protein MalK (369 aa).

Residues 4–234 (VTLRNVCKAY…PQNRFVAGFI (231 aa)) form the ABC transporter domain. 36–43 (GPSGCGKS) contributes to the ATP binding site.

This sequence belongs to the ABC transporter superfamily. Maltooligosaccharide importer (TC 3.A.1.1.1) family. The complex is composed of two ATP-binding proteins (MalK), two transmembrane proteins (MalG and MalK) and a solute-binding protein (MalE).

The protein resides in the cell inner membrane. The enzyme catalyses D-maltose(out) + ATP + H2O = D-maltose(in) + ADP + phosphate + H(+). Part of the ABC transporter complex MalEFGK involved in maltose/maltodextrin import. Responsible for energy coupling to the transport system. The polypeptide is Maltose/maltodextrin import ATP-binding protein MalK (Photobacterium profundum (strain SS9)).